Here is a 128-residue protein sequence, read N- to C-terminus: Sulfurtransferase TusD (128 aa).

Catalysis depends on Cys-78, which acts as the Cysteine persulfide intermediate.

It belongs to the DsrE/TusD family. Heterohexamer, formed by a dimer of trimers. The hexameric TusBCD complex contains 2 copies each of TusB, TusC and TusD. The TusBCD complex interacts with TusE.

It localises to the cytoplasm. Part of a sulfur-relay system required for 2-thiolation of 5-methylaminomethyl-2-thiouridine (mnm(5)s(2)U) at tRNA wobble positions. Accepts sulfur from TusA and transfers it in turn to TusE. The protein is Sulfurtransferase TusD of Salmonella newport (strain SL254).